A 285-amino-acid chain; its full sequence is Tryptophan synthase alpha chain (285 aa).

Catalysis depends on proton acceptor residues Glu-53 and Asp-64.

This sequence belongs to the TrpA family. Tetramer of two alpha and two beta chains.

It catalyses the reaction (1S,2R)-1-C-(indol-3-yl)glycerol 3-phosphate + L-serine = D-glyceraldehyde 3-phosphate + L-tryptophan + H2O. Its pathway is amino-acid biosynthesis; L-tryptophan biosynthesis; L-tryptophan from chorismate: step 5/5. In terms of biological role, the alpha subunit is responsible for the aldol cleavage of indoleglycerol phosphate to indole and glyceraldehyde 3-phosphate. The sequence is that of Tryptophan synthase alpha chain from Bordetella bronchiseptica (strain ATCC BAA-588 / NCTC 13252 / RB50) (Alcaligenes bronchisepticus).